The primary structure comprises 222 residues: UPF0758 protein Cag_1513 (222 aa).

Residues 100 to 222 (KIMAAGDVFE…WYSFRERGLL (123 aa)) enclose the MPN domain. Zn(2+) contacts are provided by histidine 171, histidine 173, and aspartate 184. Residues 171 to 184 (HNHPSGDVNPSNAD) carry the JAMM motif motif.

It belongs to the UPF0758 family.

The chain is UPF0758 protein Cag_1513 from Chlorobium chlorochromatii (strain CaD3).